The chain runs to 39 residues: Potassium channel toxin alpha-KTx 2.2 (39 aa).

3 disulfide bridges follow: C7–C29, C13–C34, and C17–C36. The interval 37 to 39 is interaction with Kv1.3 channels; sequence YPH.

The protein belongs to the short scorpion toxin superfamily. Potassium channel inhibitor family. Alpha-KTx 02 subfamily. In terms of tissue distribution, expressed by the venom gland.

It is found in the secreted. Its function is as follows. Potent inhibitor of voltage-gated potassium channels such as Kv1.1/KCNA1 (IC(50)=0.144 nM), Kv1.2/KCNA2 (IC(50)=0.675 nM), Kv1.3/KCNA3 (IC(50)=0.23 nM) and Shaker (Kd=160 nM). Suppresses expression of the Kv1.3/KCNA3 channel in lipopolysaccharide (LPS)-stimulated mouse macrophages. Down-regulates secretion of nitric oxide (NO) and inflammatory cytokines, such as TNF-alpha/TNF, IL-1beta/IL1B and IL6, in LPS-stimulated mouse macrophages in a manner dependent on Kv1.3/KCNA3 channel blockage. Reduces activation of MAPK and NF-kappa-B signaling pathways in LPS-stimulated mouse macrophages. Modulates intracellular Ca(2+) signaling in human PMA/ionomycin-triggered T-cells. Interferes with the activation of the MAPK, NF-kappa-B and NFATc1 pathways in human PMA/ionomycin-triggered T-cells. Reduces proliferation of human PMA/ionomycin-triggered T-cells. Down-regulates secretion of cytokines, such as TNF-alpha/TNF and IL2, in human PMA/ionomycin-triggered T-cells. The polypeptide is Potassium channel toxin alpha-KTx 2.2 (Centruroides margaritatus (Central American bark Scorpion)).